A 110-amino-acid polypeptide reads, in one-letter code: ATP synthase epsilon chain (110 aa).

Belongs to the ATPase epsilon chain family. In terms of assembly, F-type ATPases have 2 components, CF(1) - the catalytic core - and CF(0) - the membrane proton channel. CF(1) has five subunits: alpha(3), beta(3), gamma(1), delta(1), epsilon(1). CF(0) has three main subunits: a, b and c.

The protein localises to the cell inner membrane. Its function is as follows. Produces ATP from ADP in the presence of a proton gradient across the membrane. The polypeptide is ATP synthase epsilon chain (Rickettsia typhi (strain ATCC VR-144 / Wilmington)).